The sequence spans 530 residues: Autoinducer-2 kinase (530 aa).

This sequence belongs to the FGGY kinase family.

Its subcellular location is the cytoplasm. The catalysed reaction is (S)-4,5-dihydroxypentane-2,3-dione + ATP = (2S)-2-hydroxy-3,4-dioxopentyl phosphate + ADP + H(+). In terms of biological role, catalyzes the phosphorylation of autoinducer-2 (AI-2) to phospho-AI-2, which subsequently inactivates the transcriptional regulator LsrR and leads to the transcription of the lsr operon. Phosphorylates the ring-open form of (S)-4,5-dihydroxypentane-2,3-dione (DPD), which is the precursor to all AI-2 signaling molecules, at the C5 position. The polypeptide is Autoinducer-2 kinase (Enterobacter sp. (strain 638)).